Consider the following 101-residue polypeptide: NAD(P)H-quinone oxidoreductase subunit 4L, chloroplastic (101 aa).

The next 3 membrane-spanning stretches (helical) occupy residues 2–22 (ILEH…YGLI), 32–52 (MCLE…SDFF), and 61–81 (IFCI…LAIV).

The protein belongs to the complex I subunit 4L family. In terms of assembly, NDH is composed of at least 16 different subunits, 5 of which are encoded in the nucleus.

It localises to the plastid. Its subcellular location is the chloroplast thylakoid membrane. It catalyses the reaction a plastoquinone + NADH + (n+1) H(+)(in) = a plastoquinol + NAD(+) + n H(+)(out). The catalysed reaction is a plastoquinone + NADPH + (n+1) H(+)(in) = a plastoquinol + NADP(+) + n H(+)(out). Its function is as follows. NDH shuttles electrons from NAD(P)H:plastoquinone, via FMN and iron-sulfur (Fe-S) centers, to quinones in the photosynthetic chain and possibly in a chloroplast respiratory chain. The immediate electron acceptor for the enzyme in this species is believed to be plastoquinone. Couples the redox reaction to proton translocation, and thus conserves the redox energy in a proton gradient. This chain is NAD(P)H-quinone oxidoreductase subunit 4L, chloroplastic, found in Aethionema cordifolium (Lebanon stonecress).